Consider the following 43-residue polypeptide: Protein PsbN (43 aa).

Residues 5–27 (TLVTISISCLLVSFTGYAIYTSF) form a helical membrane-spanning segment.

This sequence belongs to the PsbN family.

It is found in the plastid. Its subcellular location is the chloroplast thylakoid membrane. Functionally, may play a role in photosystem I and II biogenesis. The chain is Protein PsbN from Welwitschia mirabilis (Tree tumbo).